Reading from the N-terminus, the 124-residue chain is Fluoride-specific ion channel FluC (124 aa).

4 helical membrane-spanning segments follow: residues 5–25 (VYIA…SGLV), 32–52 (SFPY…GLVM), 67–87 (FAIT…SFET), and 96–116 (LLIA…CTWI). Residues G75 and T78 each coordinate Na(+).

This sequence belongs to the fluoride channel Fluc/FEX (TC 1.A.43) family.

The protein localises to the cell inner membrane. It catalyses the reaction fluoride(in) = fluoride(out). Its activity is regulated as follows. Na(+) is not transported, but it plays an essential structural role and its presence is essential for fluoride channel function. Its function is as follows. Fluoride-specific ion channel. Important for reducing fluoride concentration in the cell, thus reducing its toxicity. In Geobacter sp. (strain M21), this protein is Fluoride-specific ion channel FluC.